The chain runs to 306 residues: MHTLTIASRESALAMWQAEHIRDRLRELHPECKVNILGMTTRGDQILDVTLSKIGGKGLFVKELEVALAAGEADLAVHSMKDVPMELPPGFELAVIGEREDPRDAFVSNRYARLSDLPPGSVVGTSSLRREAQLRARYPHLTVKPLRGNVGTRLKKLDEGQFDAILLAAAGLKRLGLGARIKSLLSVEESIPAAGQGALGIEIRSGNTAVAAMLAPLNDPVTAACVRAERQVSRVLGGSCQVPLGAHASYKDGRLLLEGFVAKPDGSRFLVDRAEGDASDPEAVGQALADKLLAQGARAVLDALPA.

Residue Cys240 is modified to S-(dipyrrolylmethanemethyl)cysteine.

This sequence belongs to the HMBS family. Monomer. It depends on dipyrromethane as a cofactor.

The enzyme catalyses 4 porphobilinogen + H2O = hydroxymethylbilane + 4 NH4(+). It functions in the pathway porphyrin-containing compound metabolism; protoporphyrin-IX biosynthesis; coproporphyrinogen-III from 5-aminolevulinate: step 2/4. Tetrapolymerization of the monopyrrole PBG into the hydroxymethylbilane pre-uroporphyrinogen in several discrete steps. This chain is Porphobilinogen deaminase, found in Thiobacillus denitrificans (strain ATCC 25259 / T1).